We begin with the raw amino-acid sequence, 205 residues long: MAEKNSSKKVTTKKPAAHPPAAEMVATAITELKDRNGSSLQAIKKYIATNFDVQMDRQLLFIKRALKSGVEKGKLVQTKGKGASGSFKVNVQAAKAQASEKAKKEKEKAKLLAQREKAKEKGCSEEGETAEGSRPKKVKAAPKKAKKPVKKTTEKKEKKKTPKKAPKKPAAKKSTPKKTPKKAAAKKPKTAKPKKPAXKKAAKSK.

2 disordered regions span residues 1-21 (MAEKNSSKKVTTKKPAAHPPA) and 94-205 (AKAQ…AKSK). Positions 17-91 (AHPPAAEMVA…GASGSFKVNV (75 aa)) constitute an H15 domain. A compositionally biased stretch (basic and acidic residues) spans 98 to 124 (ASEKAKKEKEKAKLLAQREKAKEKGCS). Composition is skewed to basic residues over residues 135 to 150 (PKKVKAAPKKAKKPVK) and 157 to 205 (EKKK…AKSK).

It belongs to the histone H1/H5 family.

It is found in the nucleus. The protein resides in the chromosome. Its function is as follows. Histones H1 are necessary for the condensation of nucleosome chains into higher-order structures. This is Histone H1, early embryonic from Strongylocentrotus purpuratus (Purple sea urchin).